The primary structure comprises 489 residues: Protein DETOXIFICATION 26 (489 aa).

12 consecutive transmembrane segments (helical) span residues 42-62, 75-95, 125-145, 157-177, 190-210, 217-237, 271-291, 300-320, 342-362, 385-405, 416-436, and 442-462; these read IWYI…ILII, LAAI…LLLG, IILF…TPIL, LTGT…FFFP, VIAI…WFFV, IIGT…ILFL, IMLC…GNLV, LSIC…FFAG, IVSI…IVIF, VLLA…GVAV, INLG…GWIF, and GIWA…LIII.

Belongs to the multi antimicrobial extrusion (MATE) (TC 2.A.66.1) family.

It localises to the membrane. This chain is Protein DETOXIFICATION 26, found in Arabidopsis thaliana (Mouse-ear cress).